The sequence spans 243 residues: tRNA pseudouridine synthase A (243 aa).

Asp-53 functions as the Nucleophile in the catalytic mechanism. A substrate-binding site is contributed by Tyr-111.

This sequence belongs to the tRNA pseudouridine synthase TruA family. As to quaternary structure, homodimer.

The catalysed reaction is uridine(38/39/40) in tRNA = pseudouridine(38/39/40) in tRNA. Formation of pseudouridine at positions 38, 39 and 40 in the anticodon stem and loop of transfer RNAs. This is tRNA pseudouridine synthase A from Pelodictyon phaeoclathratiforme (strain DSM 5477 / BU-1).